Here is a 621-residue protein sequence, read N- to C-terminus: Leucine aminopeptidase (621 aa).

A propeptide spanning residues Met-1–Met-73 is cleaved from the precursor. The tract at residues Ser-129–Gln-152 is disordered. A compositionally biased stretch (gly residues) spans Gly-132 to Gly-150. 3 residues coordinate a peptide: Lys-390, Asp-395, and Lys-402. Residues Lys-390 and Asp-395 each coordinate Zn(2+). Residues Asn-400–Ser-417 form an L13 loop region. Lys-402 is a catalytic residue. 5 residues coordinate Zn(2+): Asp-410, Met-412, Asp-415, Asp-475, and Glu-477. Residues Asp-415 and Asp-475 each coordinate a peptide. Residue Arg-479 is part of the active site.

The protein belongs to the peptidase M17 family. As to quaternary structure, homohexamer composed of dimer of trimers. Both the identity and concentration of metal ions available dictate the extent to which oligomerization occurs; Mn(2+) and Co(2+) induces oligomerization, whereas Mg(2+) has no effect, and Zn(2+) causes irreversible protein aggregation in vitro. The cofactor is Zn(2+).

It localises to the cytoplasm. It carries out the reaction Release of an N-terminal amino acid, Xaa-|-Yaa-, in which Xaa is preferably Leu, but may be other amino acids including Pro although not Arg or Lys, and Yaa may be Pro. Amino acid amides and methyl esters are also readily hydrolyzed, but rates on arylamides are exceedingly low.. It catalyses the reaction L-cysteinylglycine + H2O = L-cysteine + glycine. Oligomerization is required for catalytic activity and is metal-dependent. The type of metal that binds the 2 metal binding sites influences catalytic activity and substrate specificity. In vitro, activated by Co(2+), Mn(2+), Ni(2+), Mg(2+) and Zn(2+) with decreasing strength. Occupancy of the site 2 is essential and sufficient for activating the enzyme but occupation of the 2 sites is necessary for full catalytic activity. Inhibited by Ca(2+). Inhibited by fungal metabolite bestatin. In terms of biological role, aminopeptidase which preferentially cleaves leucine residues from the N-terminus of peptides. Also, has some activity towards tryptophan and methionine and has very low activity towards alanine, arginine, asparagine, phenylalanine and tyrosine. No activity towards histidine, serine, valine, isoleucine, glycine, aspartic acid and glutamic acid. In addition, cleaves the Cys-Gly dipeptide, probably as part of the glutathione regulation pathway; cleavage only occurs in the presence of Mn(2+). Plays a role in the final step of host hemoglobin catabolism, by cleaving hemoglobin-derived oligopeptides providing a source of amino acids for the parasite protein synthesis and for the maintenance of osmotic homeostasis. The polypeptide is Leucine aminopeptidase (Plasmodium vivax (strain Salvador I)).